The chain runs to 391 residues: Coproporphyrin III ferrochelatase (391 aa).

2 residues coordinate Fe-coproporphyrin III: Ser-79 and Tyr-148. Fe(2+) is bound by residues His-211 and Glu-305.

Belongs to the ferrochelatase family.

It is found in the cytoplasm. The catalysed reaction is Fe-coproporphyrin III + 2 H(+) = coproporphyrin III + Fe(2+). Its pathway is porphyrin-containing compound metabolism; protoheme biosynthesis. In terms of biological role, involved in coproporphyrin-dependent heme b biosynthesis. Catalyzes the insertion of ferrous iron into coproporphyrin III to form Fe-coproporphyrin III. This chain is Coproporphyrin III ferrochelatase, found in Tropheryma whipplei (strain TW08/27) (Whipple's bacillus).